The primary structure comprises 62 residues: MEYSTGQHLLVVPEIKKYVLTNTFSGEEHIVTEQMLKSAFKDEYNKIMSNRNSAWTVTDFYE.

The chain is Protein Gp45.2 (45.2) from Escherichia coli (Bacteriophage RB69).